Here is a 210-residue protein sequence, read N- to C-terminus: Histidine biosynthesis bifunctional protein HisIE (210 aa).

The segment at 1-106 (MTKYKIDFSK…SCFNTEVPFS (106 aa)) is phosphoribosyl-AMP cyclohydrolase. The phosphoribosyl-ATP pyrophosphohydrolase stretch occupies residues 107–210 (VQTLAQTVQD…KGERQNIEQW (104 aa)).

It in the N-terminal section; belongs to the PRA-CH family. This sequence in the C-terminal section; belongs to the PRA-PH family.

The protein resides in the cytoplasm. It catalyses the reaction 1-(5-phospho-beta-D-ribosyl)-ATP + H2O = 1-(5-phospho-beta-D-ribosyl)-5'-AMP + diphosphate + H(+). The catalysed reaction is 1-(5-phospho-beta-D-ribosyl)-5'-AMP + H2O = 1-(5-phospho-beta-D-ribosyl)-5-[(5-phospho-beta-D-ribosylamino)methylideneamino]imidazole-4-carboxamide. It functions in the pathway amino-acid biosynthesis; L-histidine biosynthesis; L-histidine from 5-phospho-alpha-D-ribose 1-diphosphate: step 2/9. The protein operates within amino-acid biosynthesis; L-histidine biosynthesis; L-histidine from 5-phospho-alpha-D-ribose 1-diphosphate: step 3/9. The chain is Histidine biosynthesis bifunctional protein HisIE (hisI) from Staphylococcus aureus (strain Mu50 / ATCC 700699).